Reading from the N-terminus, the 230-residue chain is Potassium/proton antiporter CemA (230 aa).

4 helical membrane-spanning segments follow: residues 7-27, 106-126, 145-165, and 181-201; these read LPSFLYLVFIVLLPWGVSFSF, IILHFSTNIICLAILSGSFFL, LNDSVKAFFILLVTDFFVGFH, and LGWVPNELIFTIFVCSFPVIL.

It belongs to the CemA family.

It is found in the plastid. The protein resides in the chloroplast inner membrane. The enzyme catalyses K(+)(in) + H(+)(out) = K(+)(out) + H(+)(in). In terms of biological role, contributes to K(+)/H(+) antiport activity by supporting proton efflux to control proton extrusion and homeostasis in chloroplasts in a light-dependent manner to modulate photosynthesis. Prevents excessive induction of non-photochemical quenching (NPQ) under continuous-light conditions. Indirectly promotes efficient inorganic carbon uptake into chloroplasts. The sequence is that of Potassium/proton antiporter CemA from Oryza nivara (Indian wild rice).